Reading from the N-terminus, the 288-residue chain is Peptidyl-tRNA hydrolase, chloroplastic (288 aa).

A chloroplast-targeting transit peptide spans 1–55 (MKAVAFPAKIANLSFPSNCCSLFFRSPATFLSPALPCRKLTKGIRGLEGLMSQCL). Y107 is a binding site for tRNA. Catalysis depends on H112, which acts as the Proton acceptor. TRNA-binding residues include F157, N159, and N205.

It belongs to the PTH family. Monomer.

It localises to the plastid. It is found in the chloroplast stroma. It catalyses the reaction an N-acyl-L-alpha-aminoacyl-tRNA + H2O = an N-acyl-L-amino acid + a tRNA + H(+). In terms of biological role, the natural substrate for this enzyme may be peptidyl-tRNAs which drop off the ribosome during protein synthesis. In Arabidopsis thaliana (Mouse-ear cress), this protein is Peptidyl-tRNA hydrolase, chloroplastic.